We begin with the raw amino-acid sequence, 374 residues long: Pectate lyase 3 (374 aa).

An N-terminal signal peptide occupies residues 1–22 (MKYLLPSAAAGLLLLAAQPTMA). The cysteines at positions 93 and 176 are disulfide-linked. Ca(2+) is bound by residues Asp150, Asp152, Glu187, and Asp191. Residue Arg239 is part of the active site. Cys350 and Cys373 are disulfide-bonded.

It belongs to the polysaccharide lyase 1 family. PLADES subfamily. It depends on Ca(2+) as a cofactor.

The protein localises to the secreted. The catalysed reaction is Eliminative cleavage of (1-&gt;4)-alpha-D-galacturonan to give oligosaccharides with 4-deoxy-alpha-D-galact-4-enuronosyl groups at their non-reducing ends.. It functions in the pathway glycan metabolism; pectin degradation; 2-dehydro-3-deoxy-D-gluconate from pectin: step 2/5. Its function is as follows. Involved in maceration and soft-rotting of plant tissue. The chain is Pectate lyase 3 (pel3) from Pectobacterium carotovorum (Erwinia carotovora).